The sequence spans 256 residues: NAP1-related protein 1 (256 aa).

A coiled-coil region spans residues 23 to 64 (IDAELVLSIEKLQEIQDDLEKINEKASDEVLEVEQKYNVIRK). Residues 220-256 (LTYFNNDADEEDFDGDDDGDEEGEEDDDDEEEEDGEE) are disordered. Over residues 226 to 256 (DADEEDFDGDDDGDEEGEEDDDDEEEEDGEE) the composition is skewed to acidic residues.

Belongs to the nucleosome assembly protein (NAP) family. As to quaternary structure, can form homomeric and heteromeric protein complexes with NRP2. Binds histones H2A and H2B and associates with chromatin in vivo. As to expression, ubiquitous.

It is found in the cytoplasm. It localises to the nucleus. Acts as a histone H2A/H2B chaperone in nucleosome assembly, playing a critical role for the correct expression of genes involved in root proliferation and patterning. Required with NRP2 for the maintenance of cell proliferation and differentiation in postembryonic root growth. Involved in both intramolecular and intermolecular somatic homologous recombination. In Arabidopsis thaliana (Mouse-ear cress), this protein is NAP1-related protein 1 (NRP1).